We begin with the raw amino-acid sequence, 125 residues long: Large ribosomal subunit protein bL12 (125 aa).

Belongs to the bacterial ribosomal protein bL12 family. In terms of assembly, homodimer. Part of the ribosomal stalk of the 50S ribosomal subunit. Forms a multimeric L10(L12)X complex, where L10 forms an elongated spine to which 2 to 4 L12 dimers bind in a sequential fashion. Binds GTP-bound translation factors.

In terms of biological role, forms part of the ribosomal stalk which helps the ribosome interact with GTP-bound translation factors. Is thus essential for accurate translation. This chain is Large ribosomal subunit protein bL12, found in Rickettsia conorii (strain ATCC VR-613 / Malish 7).